We begin with the raw amino-acid sequence, 186 residues long: Ran guanine nucleotide release factor (186 aa).

The tract at residues 27–70 (DLRPVPDNQEVFCHPVTDQSLIVELLELQAHVRGEAAARYHFED) is interaction with RAN.

Belongs to the MOG1 family. Monomer. Interacts with RAN, both RAN-GTP and RAN-GDP. Competes with RCC1 for a common binding site on RAN and thereby inhibits RCC1-mediated nucleotide exchange. Forms a complex with RAN-GTP and RANBP1. Interacts with the cytoplasmic loop 2 of SCN5A. In terms of tissue distribution, isoform 1 and isoform 2 are ubiquitously expressed. Detected in heart and brain.

It localises to the nucleus. The protein localises to the cytoplasm. It is found in the perinuclear region. The protein resides in the cell membrane. In terms of biological role, may regulate the intracellular trafficking of RAN. Promotes guanine nucleotide release from RAN and inhibits binding of new GTP by preventing the binding of the RAN guanine nucleotide exchange factor RCC1. Regulates the levels of GTP-bound RAN in the nucleus, and thereby plays a role in the regulation of RAN-dependent mitotic spindle dynamics. Enhances the expression of SCN5A at the cell membrane in cardiomyocytes. This is Ran guanine nucleotide release factor (RANGRF) from Homo sapiens (Human).